Reading from the N-terminus, the 185-residue chain is Putative gustatory receptor clone PTE01 (185 aa).

Residues 1 to 11 traverse the membrane as a helical segment; sequence MYLFLSNLSLA. At 12 to 42 the chain is on the extracellular side; that stretch reads DISFTSTTLPKMIVDIQTNNRAISYSGCLTQ. Residues 43 to 62 traverse the membrane as a helical segment; it reads MSFFMLFGCLDSLLLTAMAY. The Cytoplasmic portion of the chain corresponds to 63 to 84; sequence DRFVAICHPLHYQVIMNPRLCG. Residues 85 to 105 form a helical membrane-spanning segment; sequence LLVFLSILISLLVSQLHNSVV. At 106-138 the chain is on the extracellular side; it reads LQLTYFKSVDISHFFCDPSLLLNLACSDTFTNN. A helical membrane pass occupies residues 139-160; that stretch reads IVMYFVGAISGFLPISGIFFSY. Topologically, residues 161-182 are cytoplasmic; sequence YKIVSSILRMPSPGGKYKAFST. Residues 183 to 185 form a helical membrane-spanning segment; it reads CGS.

The protein belongs to the G-protein coupled receptor 1 family. Tongue specific.

It localises to the cell membrane. In terms of biological role, possible taste receptor. This chain is Putative gustatory receptor clone PTE01, found in Rattus norvegicus (Rat).